A 274-amino-acid polypeptide reads, in one-letter code: Triosephosphate isomerase (274 aa).

31-33 (NWK) contacts substrate. The Electrophile role is filled by H118. E188 serves as the catalytic Proton acceptor. Residues G194, S234, and 255-256 (GG) each bind substrate.

The protein belongs to the triosephosphate isomerase family. Homodimer.

It is found in the cytoplasm. The catalysed reaction is D-glyceraldehyde 3-phosphate = dihydroxyacetone phosphate. It functions in the pathway carbohydrate biosynthesis; gluconeogenesis. Its pathway is carbohydrate degradation; glycolysis; D-glyceraldehyde 3-phosphate from glycerone phosphate: step 1/1. In terms of biological role, involved in the gluconeogenesis. Catalyzes stereospecifically the conversion of dihydroxyacetone phosphate (DHAP) to D-glyceraldehyde-3-phosphate (G3P). This chain is Triosephosphate isomerase, found in Chlamydia trachomatis serovar D (strain ATCC VR-885 / DSM 19411 / UW-3/Cx).